A 984-amino-acid polypeptide reads, in one-letter code: Mineralocorticoid receptor (984 aa).

Positions 1-602 (METKGYHSLP…STGSSRPSKI (602 aa)) are modulating. Residues 231–243 (QGTPLTCSPNVEN) are compositionally biased toward polar residues. Disordered stretches follow at residues 231–329 (QGTP…AAST) and 347–373 (GTSA…QEVP). 5 positions are modified to phosphoserine: Ser-250, Ser-259, Ser-283, Ser-287, and Ser-299. Residues 259 to 291 (SPLSSPLSSMKSSISSPPSHCSVKSPVSSPNNV) show a composition bias toward low complexity. The segment covering 292–329 (TLRSSVSSPANINNSRCSVSSPSNTNNRSTLSSPAAST) has biased composition (polar residues). Zn(2+)-binding residues include Cys-603, Cys-606, Cys-620, Cys-623, Cys-639, Cys-645, Cys-655, and Cys-658. 2 consecutive NR C4-type zinc fingers follow at residues 603-623 (CLVC…CGSC) and 639-663 (CAGR…LQKC). A DNA-binding region (nuclear receptor) is located at residues 603–668 (CLVCGDEASG…RLQKCLQAGM (66 aa)). The segment at 669–725 (NLGARKSKKLGKLKGIHEEQPQQQQPPPPPPPPQSPEEGTTYIAPAKEPSVNTALVP) is hinge. Positions 684–710 (IHEEQPQQQQPPPPPPPPQSPEEGTTY) are disordered. Pro residues predominate over residues 692–703 (QQPPPPPPPPQS). Residues 726–964 (QLSTISRALT…EFPAMLVEII (239 aa)) enclose the NR LBD domain. 2 residues coordinate 21-hydroxyprogesterone: Asn-770 and Gln-776. 2 residues coordinate aldosterone: Asn-770 and Gln-776. The progesterone site is built by Asn-770 and Gln-776. Residues 782–785 (KWAK) form an important for coactivator binding region. 2 residues coordinate 21-hydroxyprogesterone: Arg-817 and Thr-945. Residues Arg-817 and Thr-945 each coordinate aldosterone. Residues Arg-817 and Thr-945 each contribute to the progesterone site.

The protein belongs to the nuclear hormone receptor family. NR3 subfamily. In terms of assembly, heteromultimeric cytoplasmic complex with HSP90, HSP70, and FKBP4, in the absence of ligand. After ligand binding, it translocates to the nucleus and binds to DNA as a homodimer and as a heterodimer with NR3C1. May interact with HSD11B2 in the absence of ligand. Binds the coactivators NCOA1, NCOA2, TIF1 and NRIP1. In terms of processing, phosphorylated. As to expression, ubiquitous. Highly expressed in distal tubules, convoluted tubules and cortical collecting duct in kidney, and in sweat glands. Detected at lower levels in cardiomyocytes, in epidermis and in colon enterocytes.

It localises to the cytoplasm. The protein resides in the nucleus. The protein localises to the endoplasmic reticulum membrane. Functionally, receptor for both mineralocorticoids (MC) such as aldosterone and glucocorticoids (GC) such as corticosterone or cortisol. Binds to mineralocorticoid response elements (MRE) and transactivates target genes. The effect of MC is to increase ion and water transport and thus raise extracellular fluid volume and blood pressure and lower potassium levels. The chain is Mineralocorticoid receptor (NR3C2) from Homo sapiens (Human).